The primary structure comprises 319 residues: Cobalamin biosynthesis protein CbiB (319 aa).

5 helical membrane-spanning segments follow: residues 56-76 (VMWV…LALA), 82-102 (WFGW…RSLA), 153-173 (VDGI…LAMA), 204-224 (VANY…AGLC), and 296-316 (LMWV…CGLS).

Belongs to the CobD/CbiB family.

It localises to the cell membrane. It participates in cofactor biosynthesis; adenosylcobalamin biosynthesis. Converts cobyric acid to cobinamide by the addition of aminopropanol on the F carboxylic group. However, the true cosubstrate could be (R)-1-amino-2-propanol O-2-phosphate, leading to cobinamide phosphate. The chain is Cobalamin biosynthesis protein CbiB from Salmonella paratyphi B (strain ATCC BAA-1250 / SPB7).